The sequence spans 135 residues: Small ribosomal subunit protein bS6 (135 aa).

A disordered region spans residues 99–135 (EKSAMLSHLDRNAHAGQDEERSRSPRRQRENAIERVE).

The protein belongs to the bacterial ribosomal protein bS6 family.

In terms of biological role, binds together with bS18 to 16S ribosomal RNA. The chain is Small ribosomal subunit protein bS6 from Bartonella tribocorum (strain CIP 105476 / IBS 506).